We begin with the raw amino-acid sequence, 998 residues long: Protein Smaug (998 aa).

Residues 1–37 (MKYATGTDNAMTSGISGQTNSSNSASNEMQPTTSTPT) are compositionally biased toward polar residues. Disordered stretches follow at residues 1–45 (MKYA…EATS), 50–69 (TATY…QSQP), and 329–370 (LCPA…GSSS). Residues 329 to 338 (LCPASGSRSS) show a composition bias toward low complexity. A phosphoserine mark is found at S564 and S575. The interaction with cup stretch occupies residues 583-763 (EFKPNYIKFH…KDLKFKLSKM (181 aa)). Residues 600-654 (GIGLWLKSLRLHKYIELFKNMTYEEMLLITEDFLQSVGVTKGASHKLALCIDKLK) form the SAM domain. 2 disordered regions span residues 773 to 892 (HVKP…MQQM) and 943 to 977 (NGSN…QQPK). Polar residues-rich tracts occupy residues 801 to 822 (KSGS…NFSL) and 854 to 864 (HQPQYKSSSYP). Position 971 is a phosphoserine (S971).

Belongs to the SMAUG family. As to quaternary structure, interacts with oskar (osk). Binds to the 3'-UTR of nos. Interacts with cup, which in turn recruits eIF4-E, leading to an indirect interaction between smg and eIF4-E that prevents mRNA translation.

Its subcellular location is the cytoplasm. Its function is as follows. Translation regulator that binds to the 3'-UTR of specific mRNAs such as nanos (nos) and prevent their translation. Prevents translation of unlocalized nos in the bulk cytoplasm via the recruitment of cup. The chain is Protein Smaug from Drosophila sechellia (Fruit fly).